Consider the following 412-residue polypeptide: Multifunctional CCA protein (412 aa).

Gly-8 and Arg-11 together coordinate ATP. The CTP site is built by Gly-8 and Arg-11. The Mg(2+) site is built by Asp-21 and Asp-23. Arg-91, Arg-137, and Arg-140 together coordinate ATP. 3 residues coordinate CTP: Arg-91, Arg-137, and Arg-140. The 102-residue stretch at 228-329 (TGIHTLMTLS…VKLFDSIDAW (102 aa)) folds into the HD domain.

Belongs to the tRNA nucleotidyltransferase/poly(A) polymerase family. Bacterial CCA-adding enzyme type 1 subfamily. In terms of assembly, monomer. Can also form homodimers and oligomers. Mg(2+) serves as cofactor. Requires Ni(2+) as cofactor.

It catalyses the reaction a tRNA precursor + 2 CTP + ATP = a tRNA with a 3' CCA end + 3 diphosphate. The enzyme catalyses a tRNA with a 3' CCA end + 2 CTP + ATP = a tRNA with a 3' CCACCA end + 3 diphosphate. Its function is as follows. Catalyzes the addition and repair of the essential 3'-terminal CCA sequence in tRNAs without using a nucleic acid template. Adds these three nucleotides in the order of C, C, and A to the tRNA nucleotide-73, using CTP and ATP as substrates and producing inorganic pyrophosphate. tRNA 3'-terminal CCA addition is required both for tRNA processing and repair. Also involved in tRNA surveillance by mediating tandem CCA addition to generate a CCACCA at the 3' terminus of unstable tRNAs. While stable tRNAs receive only 3'-terminal CCA, unstable tRNAs are marked with CCACCA and rapidly degraded. The chain is Multifunctional CCA protein from Escherichia coli O157:H7.